The primary structure comprises 259 residues: Ribosomal RNA small subunit methyltransferase J (259 aa).

Residues 109–110 (RD), 125–126 (ER), 161–162 (SS), and Asp-179 each bind S-adenosyl-L-methionine.

The protein belongs to the methyltransferase superfamily. RsmJ family.

The protein resides in the cytoplasm. The catalysed reaction is guanosine(1516) in 16S rRNA + S-adenosyl-L-methionine = N(2)-methylguanosine(1516) in 16S rRNA + S-adenosyl-L-homocysteine + H(+). In terms of biological role, specifically methylates the guanosine in position 1516 of 16S rRNA. The protein is Ribosomal RNA small subunit methyltransferase J of Shewanella putrefaciens (strain CN-32 / ATCC BAA-453).